The following is a 922-amino-acid chain: Isoleucine--tRNA ligase (922 aa).

The 'HIGH' region motif lies at 57 to 67 (PYANGDIHMGH). An L-isoleucyl-5'-AMP-binding site is contributed by Glu-553. A 'KMSKS' region motif is present at residues 594–598 (KMSKS). Residue Lys-597 coordinates ATP. Zn(2+) is bound by residues Cys-889, Cys-892, Cys-909, and Cys-912.

It belongs to the class-I aminoacyl-tRNA synthetase family. IleS type 1 subfamily. Monomer. Zn(2+) is required as a cofactor.

It localises to the cytoplasm. The catalysed reaction is tRNA(Ile) + L-isoleucine + ATP = L-isoleucyl-tRNA(Ile) + AMP + diphosphate. Its function is as follows. Catalyzes the attachment of isoleucine to tRNA(Ile). As IleRS can inadvertently accommodate and process structurally similar amino acids such as valine, to avoid such errors it has two additional distinct tRNA(Ile)-dependent editing activities. One activity is designated as 'pretransfer' editing and involves the hydrolysis of activated Val-AMP. The other activity is designated 'posttransfer' editing and involves deacylation of mischarged Val-tRNA(Ile). The chain is Isoleucine--tRNA ligase from Bacillus licheniformis (strain ATCC 14580 / DSM 13 / JCM 2505 / CCUG 7422 / NBRC 12200 / NCIMB 9375 / NCTC 10341 / NRRL NRS-1264 / Gibson 46).